A 412-amino-acid chain; its full sequence is Thyroxine-binding globulin (412 aa).

Positions 1 to 16 are cleaved as a signal peptide; sequence MPLFFSLVLLILGLHC. Asn-35, Asn-98, Asn-164, and Asn-252 each carry an N-linked (GlcNAc...) asparagine glycan. 2 residues coordinate thyroxine: Asn-292 and Lys-395.

The protein belongs to the serpin family. In terms of tissue distribution, expressed by the liver and secreted in plasma.

Its subcellular location is the secreted. Functionally, major thyroid hormone transport protein in serum. The sequence is that of Thyroxine-binding globulin (SERPINA7) from Ovis aries (Sheep).